A 446-amino-acid polypeptide reads, in one-letter code: Methylenetetrahydrofolate--tRNA-(uracil-5-)-methyltransferase TrmFO (446 aa).

9-14 (GGGMAG) provides a ligand contact to FAD.

This sequence belongs to the MnmG family. TrmFO subfamily. FAD serves as cofactor.

It localises to the cytoplasm. The catalysed reaction is uridine(54) in tRNA + (6R)-5,10-methylene-5,6,7,8-tetrahydrofolate + NADH + H(+) = 5-methyluridine(54) in tRNA + (6S)-5,6,7,8-tetrahydrofolate + NAD(+). It carries out the reaction uridine(54) in tRNA + (6R)-5,10-methylene-5,6,7,8-tetrahydrofolate + NADPH + H(+) = 5-methyluridine(54) in tRNA + (6S)-5,6,7,8-tetrahydrofolate + NADP(+). Its function is as follows. Catalyzes the folate-dependent formation of 5-methyl-uridine at position 54 (M-5-U54) in all tRNAs. The chain is Methylenetetrahydrofolate--tRNA-(uracil-5-)-methyltransferase TrmFO from Ruegeria sp. (strain TM1040) (Silicibacter sp.).